Reading from the N-terminus, the 335-residue chain is Nucleoid-associated protein YejK (335 aa).

This sequence belongs to the YejK family.

The protein resides in the cytoplasm. It is found in the nucleoid. In Shigella boydii serotype 18 (strain CDC 3083-94 / BS512), this protein is Nucleoid-associated protein YejK.